The chain runs to 136 residues: Large ribosomal subunit protein uL16 (136 aa).

Belongs to the universal ribosomal protein uL16 family. As to quaternary structure, part of the 50S ribosomal subunit.

Binds 23S rRNA and is also seen to make contacts with the A and possibly P site tRNAs. This Rickettsia massiliae (strain Mtu5) protein is Large ribosomal subunit protein uL16.